The chain runs to 137 residues: Large ribosomal subunit protein uL16 (137 aa).

It belongs to the universal ribosomal protein uL16 family. As to quaternary structure, part of the 50S ribosomal subunit.

Its function is as follows. Binds 23S rRNA and is also seen to make contacts with the A and possibly P site tRNAs. This chain is Large ribosomal subunit protein uL16, found in Wolbachia pipientis wMel.